The sequence spans 79 residues: MLVLARRSNQSIMIGDDIEIVIVDIKGDQVKIGVKAPKNVSVHRAEVYKEIQEENKKAAGTNIKPEDLGKLGDLFKKKT.

Belongs to the CsrA/RsmA family. In terms of assembly, homodimer; the beta-strands of each monomer intercalate to form a hydrophobic core, while the alpha-helices form wings that extend away from the core.

It localises to the cytoplasm. Its function is as follows. A translational regulator that binds mRNA to regulate translation initiation and/or mRNA stability. Usually binds in the 5'-UTR at or near the Shine-Dalgarno sequence preventing ribosome-binding, thus repressing translation. Its main target seems to be the major flagellin gene, while its function is anatagonized by FliW. The polypeptide is Translational regulator CsrA (Leptospira biflexa serovar Patoc (strain Patoc 1 / Ames)).